Here is a 102-residue protein sequence, read N- to C-terminus: Small ribosomal subunit protein uS10 (102 aa).

Belongs to the universal ribosomal protein uS10 family. As to quaternary structure, part of the 30S ribosomal subunit.

Involved in the binding of tRNA to the ribosomes. The chain is Small ribosomal subunit protein uS10 from Rhodospirillum centenum (strain ATCC 51521 / SW).